Consider the following 191-residue polypeptide: Peptidyl-tRNA hydrolase (191 aa).

Position 16 (Tyr-16) interacts with tRNA. The active-site Proton acceptor is His-21. Residues Phe-67, Asn-69, and Asn-115 each contribute to the tRNA site.

It belongs to the PTH family. In terms of assembly, monomer.

It is found in the cytoplasm. The catalysed reaction is an N-acyl-L-alpha-aminoacyl-tRNA + H2O = an N-acyl-L-amino acid + a tRNA + H(+). Functionally, hydrolyzes ribosome-free peptidyl-tRNAs (with 1 or more amino acids incorporated), which drop off the ribosome during protein synthesis, or as a result of ribosome stalling. Catalyzes the release of premature peptidyl moieties from peptidyl-tRNA molecules trapped in stalled 50S ribosomal subunits, and thus maintains levels of free tRNAs and 50S ribosomes. This chain is Peptidyl-tRNA hydrolase, found in Ruthia magnifica subsp. Calyptogena magnifica.